Consider the following 246-residue polypeptide: Sulfate transporter CysZ (246 aa).

The next 4 membrane-spanning stretches (helical) occupy residues 24–44, 69–89, 148–168, and 214–234; these read LFVLIPLTLNLLVFALLIGFA, IVWPLFVLLVLVIVFFTFTMV, LLVLSFVPGVNLIATPLWILF, and LLIPLVNLVMMPAAVAGATLF.

This sequence belongs to the CysZ family.

Its subcellular location is the cell inner membrane. High affinity, high specificity proton-dependent sulfate transporter, which mediates sulfate uptake. Provides the sulfur source for the cysteine synthesis pathway. This Pseudomonas aeruginosa (strain ATCC 15692 / DSM 22644 / CIP 104116 / JCM 14847 / LMG 12228 / 1C / PRS 101 / PAO1) protein is Sulfate transporter CysZ.